An 84-amino-acid chain; its full sequence is Cytochrome b559 subunit alpha (84 aa).

The chain crosses the membrane as a helical span at residues 22-36 (IIHIPAITILFASGF). Histidine 24 is a binding site for heme.

This sequence belongs to the PsbE/PsbF family. Heterodimer of an alpha subunit and a beta subunit. PSII is composed of 1 copy each of membrane proteins PsbA, PsbB, PsbC, PsbD, PsbE, PsbF, PsbH, PsbI, PsbJ, PsbK, PsbL, PsbM, PsbT, PsbX, Psb30/Ycf12, peripheral proteins PsbO, CyanoQ (PsbQ), PsbU, PsbV and a large number of cofactors. It forms dimeric complexes. The cofactor is heme b.

The protein localises to the cell inner membrane. This b-type cytochrome is tightly associated with the reaction center of photosystem II (PSII). PSII is a light-driven water:plastoquinone oxidoreductase that uses light energy to abstract electrons from H(2)O, generating O(2) and a proton gradient subsequently used for ATP formation. It consists of a core antenna complex that captures photons, and an electron transfer chain that converts photonic excitation into a charge separation. This is Cytochrome b559 subunit alpha from Gloeobacter violaceus (strain ATCC 29082 / PCC 7421).